The following is a 56-amino-acid chain: Potassium channel toxin alpha-KTx 9.8 (56 aa).

The N-terminal stretch at 1-19 (MSRLFTLVLIVLAMNVMMA) is a signal peptide. The propeptide occupies 20–28 (IISDPVVEA). 3 disulfide bridges follow: C31/C47, C34/C52, and C38/C54.

Belongs to the short scorpion toxin superfamily. Potassium channel inhibitor family. Alpha-KTx 09 subfamily. As to expression, expressed by the venom gland.

The protein localises to the secreted. In terms of biological role, potassium channel inhibitor. The sequence is that of Potassium channel toxin alpha-KTx 9.8 from Buthus israelis (Israeli scorpion).